Here is a 535-residue protein sequence, read N- to C-terminus: Peptide chain release factor 3 (535 aa).

The tr-type G domain occupies Lys-8–Gly-277. GTP is bound by residues Ser-17–Thr-24, Asp-85–His-89, and Asn-139–Asp-142.

It belongs to the TRAFAC class translation factor GTPase superfamily. Classic translation factor GTPase family. PrfC subfamily.

The protein localises to the cytoplasm. In terms of biological role, increases the formation of ribosomal termination complexes and stimulates activities of RF-1 and RF-2. It binds guanine nucleotides and has strong preference for UGA stop codons. It may interact directly with the ribosome. The stimulation of RF-1 and RF-2 is significantly reduced by GTP and GDP, but not by GMP. The protein is Peptide chain release factor 3 of Nitrosomonas europaea (strain ATCC 19718 / CIP 103999 / KCTC 2705 / NBRC 14298).